Consider the following 347-residue polypeptide: F-box protein At2g14500 (347 aa).

The F-box domain maps to P6–I52.

The polypeptide is F-box protein At2g14500 (Arabidopsis thaliana (Mouse-ear cress)).